The chain runs to 658 residues: Integrator complex subunit 9 (658 aa).

A Glycyl lysine isopeptide (Lys-Gly) (interchain with G-Cter in SUMO2) cross-link involves residue Lys58. Positions 548-573 (DNKHVLQPPPRPTQPTGGKKRKRASD) are disordered. A Nuclear localization signal motif is present at residues 566–570 (KKRKR).

The protein belongs to the metallo-beta-lactamase superfamily. RNA-metabolizing metallo-beta-lactamase-like family. INTS9 subfamily. In terms of assembly, component of the Integrator complex, composed of core subunits INTS1, INTS2, INTS3, INTS4, INTS5, INTS6, INTS7, INTS8, INTS9/RC74, INTS10, INTS11/CPSF3L, INTS12, INTS13, INTS14 and INTS15. The core complex associates with protein phosphatase 2A subunits PPP2CA and PPP2R1A, to form the Integrator-PP2A (INTAC) complex. INTS9 is part of the RNA endonuclease subcomplex, composed of INTS4, INTS9, INTS11 and inositol hexakisphosphate (InsP6). Interacts with WDR73; interaction is required for the assembly of the RNA endonuclease subcomplex in the cytoplasm. Interacts with BRAT1; interaction is required for the assembly of the RNA endonuclease subcomplex. Interacts with ESRRB, ESRRB is not a core component of the Integrator complex and this association is a bridge for the interaction with the multiprotein complex Integrator; attracts the transcriptional machinery.

Its subcellular location is the nucleus. It is found in the cytoplasm. Functionally, component of the integrator complex, a multiprotein complex that terminates RNA polymerase II (Pol II) transcription in the promoter-proximal region of genes. The integrator complex provides a quality checkpoint during transcription elongation by driving premature transcription termination of transcripts that are unfavorably configured for transcriptional elongation: the complex terminates transcription by (1) catalyzing dephosphorylation of the C-terminal domain (CTD) of Pol II subunit POLR2A/RPB1 and SUPT5H/SPT5, (2) degrading the exiting nascent RNA transcript via endonuclease activity and (3) promoting the release of Pol II from bound DNA. The integrator complex is also involved in terminating the synthesis of non-coding Pol II transcripts, such as enhancer RNAs (eRNAs), small nuclear RNAs (snRNAs), telomerase RNAs and long non-coding RNAs (lncRNAs). Mediates recruitment of cytoplasmic dynein to the nuclear envelope, probably as component of the integrator complex. The sequence is that of Integrator complex subunit 9 (INTS9) from Bos taurus (Bovine).